Consider the following 424-residue polypeptide: UDP-N-acetylglucosamine 1-carboxyvinyltransferase (424 aa).

Residue 22–23 coordinates phosphoenolpyruvate; that stretch reads KN. Position 95 (arginine 95) interacts with UDP-N-acetyl-alpha-D-glucosamine. Cysteine 119 serves as the catalytic Proton donor. The residue at position 119 (cysteine 119) is a 2-(S-cysteinyl)pyruvic acid O-phosphothioketal. Residues 124 to 128, aspartate 311, and isoleucine 333 contribute to the UDP-N-acetyl-alpha-D-glucosamine site; that span reads RPVDQ.

Belongs to the EPSP synthase family. MurA subfamily.

It localises to the cytoplasm. The enzyme catalyses phosphoenolpyruvate + UDP-N-acetyl-alpha-D-glucosamine = UDP-N-acetyl-3-O-(1-carboxyvinyl)-alpha-D-glucosamine + phosphate. The protein operates within cell wall biogenesis; peptidoglycan biosynthesis. Its function is as follows. Cell wall formation. Adds enolpyruvyl to UDP-N-acetylglucosamine. This chain is UDP-N-acetylglucosamine 1-carboxyvinyltransferase, found in Polaromonas sp. (strain JS666 / ATCC BAA-500).